We begin with the raw amino-acid sequence, 82 residues long: MENGATSQSEGKDPSGFLSEIIGNPVTVKLNSGVVYKGELQSVDGYMNIALEKTEEFINGVKRRSYGDAFVRGNNVMYISAD.

The region spanning 13–82 (DPSGFLSEII…GNNVMYISAD (70 aa)) is the Sm domain.

Belongs to the snRNP Sm proteins family. SmF/LSm6 subfamily. Component of the heptameric LSM1-LSM7 complex, which consists of snr-1/lsm1, snr-2/lsm2, snr-3/lsm3, snr-4/lsm4, snr-5/lsm5, snr-6/lsm6 and snr-7/lsm7. Component of the heptameric LSM2-LSM8 complex, which consists of snr-2/lsm2, snr-3/lsm3, snr-4/lsm4, snr-5/lsm5, snr-6/lsm6, snr-7/lsm7 and snr-8/lsm8. The LSm subunits form a seven-membered ring structure with a doughnut shape.

The protein resides in the cytoplasm. The protein localises to the nucleus. Component of LSm protein complexes, which are involved in RNA processing and may function in a chaperone-like manner, facilitating the efficient association of RNA processing factors with their substrates. Component of the cytoplasmic LSM1-LSM7 complex, which is thought to be involved in mRNA degradation by activating the decapping step in the 5'-to-3' mRNA decay pathway. Component of the nuclear LSM2-LSM8 complex, which is involved in splicing of nuclear mRNAs. LSM2-LSM8 associates with multiple snRNP complexes containing the U6 snRNA (U4/U6 di-snRNP, spliceosomal U4/U6.U5 tri-snRNP, and free U6 snRNP). It binds directly to the 3'-terminal U-tract of U6 snRNA and plays a role in the biogenesis and stability of the U6 snRNP and U4/U6 snRNP complexes. LSM2-LSM8 probably also is involved degradation of nuclear pre-mRNA by targeting them for decapping, and in processing of pre-tRNAs, pre-rRNAs and U3 snoRNA. The sequence is that of U6 snRNA-associated Sm-like protein LSm6 (snr-6) from Neurospora crassa (strain ATCC 24698 / 74-OR23-1A / CBS 708.71 / DSM 1257 / FGSC 987).